A 714-amino-acid chain; its full sequence is Protein ESC8 (714 aa).

2 disordered regions span residues 598-674 (APTG…ELHN) and 694-714 (RQLQ…RKGL). Polar residues predominate over residues 610-624 (TSSQRRTTVHYSSDV). Residues 628-650 (VSEESENEVDIDVSDDYDSEYLS) show a composition bias toward acidic residues. Positions 654-674 (TLTRKGEDRTDKSFGKRELHN) are enriched in basic and acidic residues. Positions 704–714 (RSLRRNARKGL) are enriched in basic residues.

As to quaternary structure, interacts with GAL11 and SIR2.

The protein resides in the cytoplasm. Its subcellular location is the nucleus. Involved in HMR and telomere silencing via the recruitment or stabilizing of the SIR (silent information regulators) complex. In Saccharomyces cerevisiae (strain ATCC 204508 / S288c) (Baker's yeast), this protein is Protein ESC8 (ESC8).